A 207-amino-acid polypeptide reads, in one-letter code: Large ribosomal subunit protein uL4 (207 aa).

The protein belongs to the universal ribosomal protein uL4 family. Part of the 50S ribosomal subunit.

Functionally, one of the primary rRNA binding proteins, this protein initially binds near the 5'-end of the 23S rRNA. It is important during the early stages of 50S assembly. It makes multiple contacts with different domains of the 23S rRNA in the assembled 50S subunit and ribosome. In terms of biological role, forms part of the polypeptide exit tunnel. The chain is Large ribosomal subunit protein uL4 from Rickettsia rickettsii (strain Iowa).